The following is a 382-amino-acid chain: Carbamoyl phosphate synthase small chain (382 aa).

The CPSase stretch occupies residues 1–189; the sequence is MIKSALLVLE…GLPEAKSEDD (189 aa). L-glutamine is bound by residues Ser-47, Gly-241, and Gly-243. Positions 193-380 constitute a Glutamine amidotransferase type-1 domain; that stretch reads HVVAYDFGAK…IELIEQYRQS (188 aa). The Nucleophile role is filled by Cys-269. Residues Leu-270, Gln-273, Asn-311, Gly-313, and Phe-314 each contribute to the L-glutamine site. Active-site residues include His-353 and Glu-355.

This sequence belongs to the CarA family. As to quaternary structure, composed of two chains; the small (or glutamine) chain promotes the hydrolysis of glutamine to ammonia, which is used by the large (or ammonia) chain to synthesize carbamoyl phosphate. Tetramer of heterodimers (alpha,beta)4.

The enzyme catalyses hydrogencarbonate + L-glutamine + 2 ATP + H2O = carbamoyl phosphate + L-glutamate + 2 ADP + phosphate + 2 H(+). It catalyses the reaction L-glutamine + H2O = L-glutamate + NH4(+). It participates in amino-acid biosynthesis; L-arginine biosynthesis; carbamoyl phosphate from bicarbonate: step 1/1. Its pathway is pyrimidine metabolism; UMP biosynthesis via de novo pathway; (S)-dihydroorotate from bicarbonate: step 1/3. Functionally, small subunit of the glutamine-dependent carbamoyl phosphate synthetase (CPSase). CPSase catalyzes the formation of carbamoyl phosphate from the ammonia moiety of glutamine, carbonate, and phosphate donated by ATP, constituting the first step of 2 biosynthetic pathways, one leading to arginine and/or urea and the other to pyrimidine nucleotides. The small subunit (glutamine amidotransferase) binds and cleaves glutamine to supply the large subunit with the substrate ammonia. This Salmonella typhimurium (strain LT2 / SGSC1412 / ATCC 700720) protein is Carbamoyl phosphate synthase small chain.